The primary structure comprises 328 residues: uncharacterized protein (328 aa).

This is an uncharacterized protein from Saccharomyces cerevisiae (strain ATCC 204508 / S288c) (Baker's yeast).